A 444-amino-acid polypeptide reads, in one-letter code: Tubulin beta-2 chain (444 aa).

Residues Gln-11, Glu-69, Ser-138, Gly-142, Thr-143, Gly-144, Asn-204, and Asn-226 each contribute to the GTP site. Glu-69 is a binding site for Mg(2+).

The protein belongs to the tubulin family. Dimer of alpha and beta chains. A typical microtubule is a hollow water-filled tube with an outer diameter of 25 nm and an inner diameter of 15 nM. Alpha-beta heterodimers associate head-to-tail to form protofilaments running lengthwise along the microtubule wall with the beta-tubulin subunit facing the microtubule plus end conferring a structural polarity. Microtubules usually have 13 protofilaments but different protofilament numbers can be found in some organisms and specialized cells. The cofactor is Mg(2+).

Its subcellular location is the cytoplasm. It localises to the cytoskeleton. In terms of biological role, tubulin is the major constituent of microtubules, a cylinder consisting of laterally associated linear protofilaments composed of alpha- and beta-tubulin heterodimers. Microtubules grow by the addition of GTP-tubulin dimers to the microtubule end, where a stabilizing cap forms. Below the cap, tubulin dimers are in GDP-bound state, owing to GTPase activity of alpha-tubulin. In Zea mays (Maize), this protein is Tubulin beta-2 chain (TUBB2).